Reading from the N-terminus, the 427-residue chain is Adenylosuccinate synthetase (427 aa).

Residues 12–18 and 40–42 each bind GTP; these read GDEGKGK and GHT. The active-site Proton acceptor is the Asp-13. The Mg(2+) site is built by Asp-13 and Gly-40. IMP contacts are provided by residues 13–16, 38–41, Thr-128, Arg-142, Gln-223, Thr-238, and Arg-302; these read DEGK and NAGH. His-41 serves as the catalytic Proton donor. A substrate-binding site is contributed by 298-304; the sequence is VTTGRDR. Residues Arg-304, 330-332, and 412-414 each bind GTP; these read KLD and GVG.

The protein belongs to the adenylosuccinate synthetase family. As to quaternary structure, homodimer. Requires Mg(2+) as cofactor.

It is found in the cytoplasm. It carries out the reaction IMP + L-aspartate + GTP = N(6)-(1,2-dicarboxyethyl)-AMP + GDP + phosphate + 2 H(+). It functions in the pathway purine metabolism; AMP biosynthesis via de novo pathway; AMP from IMP: step 1/2. Plays an important role in the de novo pathway of purine nucleotide biosynthesis. Catalyzes the first committed step in the biosynthesis of AMP from IMP. The polypeptide is Adenylosuccinate synthetase (Streptomyces griseus subsp. griseus (strain JCM 4626 / CBS 651.72 / NBRC 13350 / KCC S-0626 / ISP 5235)).